Here is a 730-residue protein sequence, read N- to C-terminus: ABC transporter G family member 3 (730 aa).

Residues 1–28 (MEEIQSQSDLYRSSSSSASSPTSRVPSS) are compositionally biased toward low complexity. Residues 1–100 (MEEIQSQSDL…MASPPVPEGG (100 aa)) form a disordered region. Acidic residues predominate over residues 47–56 (DSPEWEDTPD). Residues 72–91 (NDATTTPVSPSLSKMNSGSM) are compositionally biased toward polar residues. Phosphoserine is present on Ser93. Positions 114–356 (IAWKDLTVTM…FSNAGFPCPI (243 aa)) constitute an ABC transporter domain. Residue 151–158 (GPAKSGKS) coordinates ATP. Residues 441–653 (TRVAVLTWRS…SIEGLLENEY (213 aa)) enclose the ABC transmembrane type-2 domain. Helical transmembrane passes span 465–485 (LILY…LGHS), 495–515 (AVFV…PSLL), 532–552 (AFVF…LMSI), 575–595 (VLNF…IACI), 600–620 (YWST…AGHF), and 689–709 (MLVL…LLRF).

Belongs to the ABC transporter superfamily. ABCG family. Eye pigment precursor importer (TC 3.A.1.204) subfamily.

The protein localises to the membrane. In Arabidopsis thaliana (Mouse-ear cress), this protein is ABC transporter G family member 3 (ABCG3).